Consider the following 669-residue polypeptide: DNA ligase (669 aa).

Residues 32–36 (DAEYD), 81–82 (SL), and Glu113 each bind NAD(+). The active-site N6-AMP-lysine intermediate is the Lys115. The NAD(+) site is built by Arg136, Glu173, Lys290, and Lys314. The Zn(2+) site is built by Cys408, Cys411, Cys426, and Cys432. The BRCT domain occupies 592–669 (AVDSALAGKI…DEQALIEFLK (78 aa)).

The protein belongs to the NAD-dependent DNA ligase family. LigA subfamily. Mg(2+) serves as cofactor. It depends on Mn(2+) as a cofactor.

The enzyme catalyses NAD(+) + (deoxyribonucleotide)n-3'-hydroxyl + 5'-phospho-(deoxyribonucleotide)m = (deoxyribonucleotide)n+m + AMP + beta-nicotinamide D-nucleotide.. Its function is as follows. DNA ligase that catalyzes the formation of phosphodiester linkages between 5'-phosphoryl and 3'-hydroxyl groups in double-stranded DNA using NAD as a coenzyme and as the energy source for the reaction. It is essential for DNA replication and repair of damaged DNA. This is DNA ligase from Vibrio cholerae serotype O1 (strain ATCC 39541 / Classical Ogawa 395 / O395).